The sequence spans 391 residues: Formate-dependent phosphoribosylglycinamide formyltransferase (391 aa).

N(1)-(5-phospho-beta-D-ribosyl)glycinamide-binding positions include 20–21 and glutamate 80; that span reads EL. ATP-binding positions include arginine 112, lysine 153, 158–163, 193–196, and glutamate 201; these read SSGKGQ and EGFV. In terms of domain architecture, ATP-grasp spans 117–306; the sequence is RLAAEELQLP…EFALHVRAFT (190 aa). Residues glutamate 265 and glutamate 277 each contribute to the Mg(2+) site. Residues aspartate 284, lysine 354, and 361–362 each bind N(1)-(5-phospho-beta-D-ribosyl)glycinamide; that span reads RR.

The protein belongs to the PurK/PurT family. In terms of assembly, homodimer.

The catalysed reaction is N(1)-(5-phospho-beta-D-ribosyl)glycinamide + formate + ATP = N(2)-formyl-N(1)-(5-phospho-beta-D-ribosyl)glycinamide + ADP + phosphate + H(+). It participates in purine metabolism; IMP biosynthesis via de novo pathway; N(2)-formyl-N(1)-(5-phospho-D-ribosyl)glycinamide from N(1)-(5-phospho-D-ribosyl)glycinamide (formate route): step 1/1. Its function is as follows. Involved in the de novo purine biosynthesis. Catalyzes the transfer of formate to 5-phospho-ribosyl-glycinamide (GAR), producing 5-phospho-ribosyl-N-formylglycinamide (FGAR). Formate is provided by PurU via hydrolysis of 10-formyl-tetrahydrofolate. This chain is Formate-dependent phosphoribosylglycinamide formyltransferase, found in Aliivibrio fischeri (strain ATCC 700601 / ES114) (Vibrio fischeri).